We begin with the raw amino-acid sequence, 139 residues long: Putative nickel-responsive regulator (139 aa).

Positions 79, 90, 92, and 98 each coordinate Ni(2+).

It belongs to the transcriptional regulatory CopG/NikR family. Ni(2+) serves as cofactor.

Its function is as follows. Transcriptional regulator. This Geobacter sulfurreducens (strain ATCC 51573 / DSM 12127 / PCA) protein is Putative nickel-responsive regulator.